The following is a 1099-amino-acid chain: Transmembrane protein 132C (1099 aa).

A signal peptide spans Met1 to Ser31. Residues Arg32–Asp915 lie on the Extracellular side of the membrane. A glycan (N-linked (GlcNAc...) asparagine) is linked at Asn95. Residues Gly237 to Arg260 form a disordered region. N-linked (GlcNAc...) asparagine glycans are attached at residues Asn314 and Asn371. Residues Asp801–Asp872 form a disordered region. Over residues Glu813 to Gly849 the composition is skewed to basic and acidic residues. The helical transmembrane segment at Leu916–Ile936 threads the bilayer. Over Asn937–Val1099 the chain is Cytoplasmic. Residues Asn1002–Lys1045 are disordered. Residues Gly1008–Val1018 are compositionally biased toward polar residues.

It belongs to the TMEM132 family.

Its subcellular location is the membrane. The sequence is that of Transmembrane protein 132C (Tmem132c) from Mus musculus (Mouse).